The sequence spans 319 residues: Acetyl esterase (319 aa).

Positions 91–93 (HGG) match the Involved in the stabilization of the negatively charged intermediate by the formation of the oxyanion hole motif. Residues S165, D262, and H292 contribute to the active site.

The protein belongs to the 'GDXG' lipolytic enzyme family. As to quaternary structure, homodimer. Interacts with MalT and MelA.

The protein resides in the cytoplasm. Its function is as follows. Displays esterase activity towards short chain fatty esters (acyl chain length of up to 8 carbons). Able to hydrolyze triacetylglycerol (triacetin) and tributyrylglycerol (tributyrin), but not trioleylglycerol (triolein) or cholesterol oleate. Negatively regulates MalT activity by antagonizing maltotriose binding. Inhibits MelA galactosidase activity. This chain is Acetyl esterase, found in Shigella flexneri serotype 5b (strain 8401).